Reading from the N-terminus, the 322-residue chain is Undecaprenyl-phosphate 4-deoxy-4-formamido-L-arabinose transferase (322 aa).

Residues 1 to 235 (MFEIHPVKKV…TCLTTTPLRM (235 aa)) lie on the Cytoplasmic side of the membrane. The chain crosses the membrane as a helical span at residues 236 to 256 (LSLLGSIIAIGGFSIAVLLVI). Topologically, residues 257 to 269 (LRLTFGPQWAAEG) are periplasmic. Residues 270-290 (VFMLFAVLFTFIGAQFIGMGL) form a helical membrane-spanning segment. Residues 291-322 (LGEYIGRIYTDVRARPRYFVQQVIRPSSKENE) lie on the Cytoplasmic side of the membrane.

It belongs to the glycosyltransferase 2 family.

It localises to the cell inner membrane. It catalyses the reaction UDP-4-deoxy-4-formamido-beta-L-arabinose + di-trans,octa-cis-undecaprenyl phosphate = 4-deoxy-4-formamido-alpha-L-arabinopyranosyl di-trans,octa-cis-undecaprenyl phosphate + UDP. Its pathway is glycolipid biosynthesis; 4-amino-4-deoxy-alpha-L-arabinose undecaprenyl phosphate biosynthesis; 4-amino-4-deoxy-alpha-L-arabinose undecaprenyl phosphate from UDP-4-deoxy-4-formamido-beta-L-arabinose and undecaprenyl phosphate: step 1/2. The protein operates within bacterial outer membrane biogenesis; lipopolysaccharide biosynthesis. In terms of biological role, catalyzes the transfer of 4-deoxy-4-formamido-L-arabinose from UDP to undecaprenyl phosphate. The modified arabinose is attached to lipid A and is required for resistance to polymyxin and cationic antimicrobial peptides. In Shigella flexneri, this protein is Undecaprenyl-phosphate 4-deoxy-4-formamido-L-arabinose transferase.